Reading from the N-terminus, the 489-residue chain is Glutamyl-tRNA(Gln) amidotransferase subunit A (489 aa).

Catalysis depends on charge relay system residues lysine 78 and serine 153. Serine 177 acts as the Acyl-ester intermediate in catalysis.

Belongs to the amidase family. GatA subfamily. Heterotrimer of A, B and C subunits.

It carries out the reaction L-glutamyl-tRNA(Gln) + L-glutamine + ATP + H2O = L-glutaminyl-tRNA(Gln) + L-glutamate + ADP + phosphate + H(+). Allows the formation of correctly charged Gln-tRNA(Gln) through the transamidation of misacylated Glu-tRNA(Gln) in organisms which lack glutaminyl-tRNA synthetase. The reaction takes place in the presence of glutamine and ATP through an activated gamma-phospho-Glu-tRNA(Gln). The sequence is that of Glutamyl-tRNA(Gln) amidotransferase subunit A from Enterococcus faecalis (strain ATCC 700802 / V583).